Here is a 602-residue protein sequence, read N- to C-terminus: Transcription factor COE4 (602 aa).

Residues Arg-64 to Asn-67 are interaction with DNA. The segment at Cys-152–Cys-171 adopts a C5-type zinc-finger fold. Interaction with DNA regions lie at residues Asn-198–Asn-205 and Asn-237–Lys-240. The IPT/TIG domain maps to Pro-256–Tyr-338. Disordered stretches follow at residues Pro-448–Gly-476 and Pro-558–Ser-602. Positions Leu-560–Ala-569 are enriched in pro residues.

Belongs to the COE family. In terms of assembly, forms either a homodimer or a heterodimer with a related family member. Interacts with MAPK3/ERK1. Interacts with STAT5A. In terms of tissue distribution, most highly expressed in cytotoxic NK cells, especially CD16(+) NK cells, followed by CD8(+) T-cells.

The protein resides in the nucleus. Functionally, transcription factor. Binds to specific sequence motif 5'-CCCNNG[GA]G-3' in regulatory elements of putative target immunoregulatory genes such as NKG7, GZMA, and TBX21. Positively modulates transcription of NKG7. May play a role in regulating FAS/CD95-mediated apoptosis in cytotoxic NK cells and T-cells, probably downstream of interleukin IL2 signaling. In Homo sapiens (Human), this protein is Transcription factor COE4 (EBF4).